The following is a 163-amino-acid chain: Ubiquitin-like protein 1-ribosomal protein eS31 fusion protein (163 aa).

A Ubiquitin-like domain is found at 1–70 (MVFVKTLHRT…IYVNLELLGG (70 aa)). A Glycyl lysine isopeptide (Gly-Lys) (interchain with K-? in acceptor proteins) cross-link involves residue Gly70. The segment at 115 to 138 (CQQPSCGGGVFMAQHANRHYCGRC) adopts a C4-type zinc-finger fold.

This sequence in the N-terminal section; belongs to the ubiquitin family. In the C-terminal section; belongs to the eukaryotic ribosomal protein eS31 family.

The polypeptide is Ubiquitin-like protein 1-ribosomal protein eS31 fusion protein (Caenorhabditis elegans).